The primary structure comprises 460 residues: Argininosuccinate lyase (460 aa).

This sequence belongs to the lyase 1 family. Argininosuccinate lyase subfamily.

The protein localises to the cytoplasm. It catalyses the reaction 2-(N(omega)-L-arginino)succinate = fumarate + L-arginine. It participates in amino-acid biosynthesis; L-arginine biosynthesis; L-arginine from L-ornithine and carbamoyl phosphate: step 3/3. This chain is Argininosuccinate lyase, found in Campylobacter jejuni subsp. doylei (strain ATCC BAA-1458 / RM4099 / 269.97).